Consider the following 1171-residue polypeptide: Putative tricorn protease homolog 2 (1171 aa).

A disordered region spans residues Ala-432–Gly-498. Low complexity-rich tracts occupy residues Ala-444–Ala-456 and Ile-466–Gly-498. Catalysis depends on His-827, which acts as the Charge relay system. A PDZ-like region spans residues Tyr-842–Glu-941. Position 1002–1004 (Ala-1002–Gly-1004) interacts with substrate. Catalysis depends on Ser-1051, which acts as the Nucleophile. A substrate-binding site is contributed by Gly-1079–Thr-1081. Glu-1109 functions as the Charge relay system in the catalytic mechanism. The tract at residues Pro-1149–Glu-1171 is disordered. Over residues Val-1159–Glu-1171 the composition is skewed to basic and acidic residues.

This sequence belongs to the peptidase S41B family.

The protein resides in the cytoplasm. In terms of biological role, degrades oligopeptides in a sequential manner. The polypeptide is Putative tricorn protease homolog 2 (tri2) (Streptomyces coelicolor (strain ATCC BAA-471 / A3(2) / M145)).